The sequence spans 147 residues: uncharacterized protein (147 aa).

2 disordered regions span residues 1-49 (MRTP…NLNE) and 125-147 (SPSP…RKSN). 2 stretches are compositionally biased toward low complexity: residues 8-49 (NNNY…NLNE) and 125-140 (SPSP…PQNT).

This is an uncharacterized protein from Dictyostelium discoideum (Social amoeba).